Reading from the N-terminus, the 253-residue chain is Octanoyltransferase (253 aa).

Positions 47-236 (PETPDQVWLV…ALCEVLAARE (190 aa)) constitute a BPL/LPL catalytic domain. Substrate contacts are provided by residues 87–94 (RGGQITYH), 159–161 (ALG), and 172–174 (GVS). The Acyl-thioester intermediate role is filled by Cys-190.

This sequence belongs to the LipB family.

It is found in the cytoplasm. The enzyme catalyses octanoyl-[ACP] + L-lysyl-[protein] = N(6)-octanoyl-L-lysyl-[protein] + holo-[ACP] + H(+). It functions in the pathway protein modification; protein lipoylation via endogenous pathway; protein N(6)-(lipoyl)lysine from octanoyl-[acyl-carrier-protein]: step 1/2. Catalyzes the transfer of endogenously produced octanoic acid from octanoyl-acyl-carrier-protein onto the lipoyl domains of lipoate-dependent enzymes. Lipoyl-ACP can also act as a substrate although octanoyl-ACP is likely to be the physiological substrate. This chain is Octanoyltransferase, found in Cupriavidus pinatubonensis (strain JMP 134 / LMG 1197) (Cupriavidus necator (strain JMP 134)).